Reading from the N-terminus, the 307-residue chain is Acetaldehyde dehydrogenase 1 (307 aa).

Cysteine 132 functions as the Acyl-thioester intermediate in the catalytic mechanism. NAD(+) contacts are provided by residues 163-171 and asparagine 274; that span reads SVGPGTRKN.

It belongs to the acetaldehyde dehydrogenase family.

The catalysed reaction is acetaldehyde + NAD(+) + CoA = acetyl-CoA + NADH + H(+). This Comamonas testosteroni (Pseudomonas testosteroni) protein is Acetaldehyde dehydrogenase 1 (tesF).